The sequence spans 242 residues: Caspase-14 (242 aa).

The propeptide occupies 1–5 (MSNPR). Active-site residues include H89 and C132. A propeptide spanning residues 147 to 152 (EIVMVI) is cleaved from the precursor.

Belongs to the peptidase C14A family. As to quaternary structure, heterodimer of a large and a small subunit, both processed from the precursor; the mature active form is a p17/p10 dimer and the intermediate form a p20/p8 dimer. Maturation by proteolytic processing appears to be a two-step process. The precursor is processed by KLK7 to yield the p20/p8 intermediate form which acts on the precursor to yield the p17/p10 mature form. Initially, cleavage between Ile-152 and Lys-153 has been proposed to yield the large and small subunits of the active enzyme. Expressed in keratinocytes of adult skin suprabasal layers (from spinous layers to the stratum granulosum and stratum corneum) (at protein level). Expressed in keratinocytes of hair shaft and sebaceous glands (at protein level). In psoriatic skin only expressed at very low levels. The p17/10 mature form is expressed in epidermis stratum corneum, the p20/p8 intermediate form in epidermis upper granular cells of the stratum granulosum.

The protein localises to the cytoplasm. The protein resides in the nucleus. With respect to regulation, inhibited by caspase-1 inhibitor YVAD-FMK and the pan-caspase inhibitor VAD-FMK. Functionally, non-apoptotic caspase involved in epidermal differentiation. Is the predominant caspase in epidermal stratum corneum. Seems to play a role in keratinocyte differentiation and is required for cornification. Regulates maturation of the epidermis by proteolytically processing filaggrin. In vitro has a preference for the substrate [WY]-X-X-D motif and is active on the synthetic caspase substrate WEHD-ACF. Involved in processing of prosaposin in the epidermis. May be involved in retinal pigment epithelium cell barrier function. Involved in DNA degradation in differentiated keratinocytes probably by cleaving DFFA/ICAD leading to liberation of DFFB/CAD. This chain is Caspase-14 (CASP14), found in Homo sapiens (Human).